The primary structure comprises 112 residues: UPF0342 protein SUB0718 (112 aa).

It belongs to the UPF0342 family.

The protein is UPF0342 protein SUB0718 of Streptococcus uberis (strain ATCC BAA-854 / 0140J).